The following is a 266-amino-acid chain: Basic endochitinase C (266 aa).

The signal sequence occupies residues 1–23 (MRSLAVVVAVVATVAMAIGTAHG). 3 cysteine pairs are disulfide-bonded: Cys46-Cys108, Cys120-Cys128, and Cys246-Cys259. Glu90 acts as the Proton donor in catalysis.

It belongs to the glycosyl hydrolase 19 family. Chitinase class II subfamily. In terms of tissue distribution, localized to the starchy endoderm of the seed May localize to other parts of the seed including the aleurone cells (at protein level).

The catalysed reaction is Random endo-hydrolysis of N-acetyl-beta-D-glucosaminide (1-&gt;4)-beta-linkages in chitin and chitodextrins.. Functionally, defense against chitin-containing fungal pathogens. Binds the hyphal tips of fungi and degrades nascent chitin. In Secale cereale (Rye), this protein is Basic endochitinase C.